A 224-amino-acid chain; its full sequence is UPF0758 protein Noc_0236 (224 aa).

The MPN domain occupies 102–224 (VLTDPQTTQR…TLSFAERGLL (123 aa)). 3 residues coordinate Zn(2+): histidine 173, histidine 175, and aspartate 186. Positions 173–186 (HNHPSGVAEPSRAD) match the JAMM motif motif.

Belongs to the UPF0758 family.

The chain is UPF0758 protein Noc_0236 from Nitrosococcus oceani (strain ATCC 19707 / BCRC 17464 / JCM 30415 / NCIMB 11848 / C-107).